A 459-amino-acid chain; its full sequence is UDP-N-acetylmuramoylalanine--D-glutamate ligase (459 aa).

118–124 (GTNGKTT) is a binding site for ATP.

This sequence belongs to the MurCDEF family.

It is found in the cytoplasm. The catalysed reaction is UDP-N-acetyl-alpha-D-muramoyl-L-alanine + D-glutamate + ATP = UDP-N-acetyl-alpha-D-muramoyl-L-alanyl-D-glutamate + ADP + phosphate + H(+). The protein operates within cell wall biogenesis; peptidoglycan biosynthesis. Cell wall formation. Catalyzes the addition of glutamate to the nucleotide precursor UDP-N-acetylmuramoyl-L-alanine (UMA). The sequence is that of UDP-N-acetylmuramoylalanine--D-glutamate ligase from Desulfosudis oleivorans (strain DSM 6200 / JCM 39069 / Hxd3) (Desulfococcus oleovorans).